Reading from the N-terminus, the 134-residue chain is Profilin-3 (134 aa).

Cysteines 13 and 118 form a disulfide. Residues 84 to 100 carry the Involved in PIP2 interaction motif; that stretch reads AVIRGKKGSGGITIKKT. At threonine 114 the chain carries Phosphothreonine.

Belongs to the profilin family. Occurs in many kinds of cells as a complex with monomeric actin in a 1:1 ratio. Post-translationally, phosphorylated by MAP kinases.

Its subcellular location is the cytoplasm. The protein resides in the cytoskeleton. Binds to actin and affects the structure of the cytoskeleton. At high concentrations, profilin prevents the polymerization of actin, whereas it enhances it at low concentrations. The protein is Profilin-3 of Olea europaea (Common olive).